A 1154-amino-acid polypeptide reads, in one-letter code: Voltage-dependent calcium channel subunit alpha-2/delta-2 (1154 aa).

A signal peptide spans 1–18 (MAVPARTCGASWPGPVRT). The interval 1-37 (MAVPARTCGASWPGPVRTARPWPGRGPRPCPDPRGPA) is disordered. The Extracellular segment spans residues 19–1116 (ARPWPGRGPR…TEDTSDCGRG (1098 aa)). The span at 24–34 (GRGPRPCPDPR) shows a compositional bias: pro residues. Residue Asn-205 is glycosylated (N-linked (GlcNAc...) asparagine). The VWFA domain maps to 294–472 (DMVIIVDVSG…INTQEYLDVL (179 aa)). A divalent metal cation is bound by residues Asp-300, Ser-302, and Ser-304. An MIDAS-like motif motif is present at residues 300–304 (DVSGS). Residues Asn-389, Asn-421, Asn-510, Asn-543, Asn-627, and Asn-864 are each glycosylated (N-linked (GlcNAc...) asparagine). A disulfide bond links Cys-446 and Cys-1101. In terms of domain architecture, Cache spans 488–577 (WTNVYEDALG…KPQTTNFREP (90 aa)). A helical membrane pass occupies residues 1117–1137 (ASFPPSLGVLVSLQLLLLLGL). At 1138-1154 (PPRPQPQVHSFAASRHL) the chain is on the cytoplasmic side.

Belongs to the calcium channel subunit alpha-2/delta family. Dimer formed of alpha-2-2 and delta-2 chains; disulfide-linked. Voltage-dependent calcium channels are multisubunit complexes, consisting of alpha-1 (CACNA1), alpha-2 (CACNA2D), beta (CACNB) and delta (CACNA2D) subunits in a 1:1:1:1 ratio. In terms of processing, N-glycosylated. May be proteolytically processed into subunits alpha-2-2 and delta-2 that are disulfide-linked. It is however unclear whether such cleavage really takes place in vivo and has a functional role. According to PubMed:11306709, it is processed, at least in vitro, while according to PubMed:17052222, it is only poorly processed in vivo. As to expression, predominantly expressed in brain in a restricted pattern. Also expressed at lower level in kidney and testis Not expressed in lung at any moment of development. In brain, it localizes to sections of P21 brain. Expressed at high level in the cerebellum, with moderate levels in medulla, pons, and striatum. Also expressed in cortex, hippocampus, habenula and nucleus reticularis thalami (nRT). Strongly expressed in cerebellar Purkinje cells.

The protein localises to the membrane. Functionally, the alpha-2/delta subunit of voltage-dependent calcium channels regulates calcium current density and activation/inactivation kinetics of the calcium channel. Acts as a regulatory subunit for P/Q-type calcium channel (CACNA1A), N-type (CACNA1B), L-type (CACNA1C OR CACNA1D) and possibly T-type (CACNA1G). This Mus musculus (Mouse) protein is Voltage-dependent calcium channel subunit alpha-2/delta-2 (Cacna2d2).